The chain runs to 715 residues: Eosinophil peroxidase (715 aa).

Positions 1–17 (MHLLPALAGVLATLVLA) are cleaved as a signal peptide. A propeptide spanning residues 18–139 (QPCEGTDPAS…SGCALRDQAE (122 aa)) is cleaved from the precursor. Asn52 and Asn113 each carry an N-linked (GlcNAc...) asparagine glycan. A disulfide bond links Cys141 and Cys152. Residue Asp232 participates in heme b binding. Residue His233 is the Proton acceptor of the active site. Asp234 is a Ca(2+) binding site. Cystine bridges form between Cys253–Cys263 and Cys257–Cys281. Positions 306, 308, 310, and 312 each coordinate Ca(2+). Asn327 and Asn363 each carry an N-linked (GlcNAc...) asparagine glycan. A disulfide bridge connects residues Cys359 and Cys370. Heme b is bound by residues Glu380 and His474. Residue Tyr488 is modified to 3'-nitrotyrosine. 2 disulfide bridges follow: Cys578-Cys635 and Cys676-Cys701. N-linked (GlcNAc...) asparagine glycans are attached at residues Asn700 and Asn708.

This sequence belongs to the peroxidase family. XPO subfamily. In terms of assembly, tetramer of two light chains and two heavy chains. Ca(2+) serves as cofactor. It depends on heme b as a cofactor.

It is found in the cytoplasmic granule. The enzyme catalyses 2 a phenolic donor + H2O2 = 2 a phenolic radical donor + 2 H2O. Functionally, mediates tyrosine nitration of secondary granule proteins in mature resting eosinophils. Shows significant inhibitory activity towards Mycobacterium tuberculosis H37Rv by inducing bacterial fragmentation and lysis. The chain is Eosinophil peroxidase (EPX) from Homo sapiens (Human).